Here is a 451-residue protein sequence, read N- to C-terminus: MREIVHIQIGQCGNQIGAKFWEVIGEEHGIDCAGSYCGTSALQLERISVYYNEAYGKKYVPRAVLVDLEPGTMDSIRSSRLGVLFQPDSFVHGNSGAGNNWAKGHYTEGAELIENVMDVVRRESESCDCLQGFQIVHSLGGGTGSGMGTLLMNKIREEYPDRILNSFSVMPSPKVSDTVVEPYNAVLSIHQLIENTDACFCIDNEALYDICFRTLRLTTPTYGDLNHLVSLTMSGITTSLRFPGQLNADLRKLAVNMVPFPRLHFFMPGFAPLTAQGSQQYRALSVAELTQQMFDARNIMAACDPRRGRYLTVACIFRGKMSTKEVDQQLLSIQTRNSNCFVEWIPNNVKVAVCDIPPRGLNMAATFLGNNTAIQELFTRVSEHFSAMFRRRAFVHWYTSEGMDISEFGEAESDIHDLVSEYQQFQDVRAGLEDSEEDVEEAEVEAEDKDH.

The MREI motif signature appears at 1-4 (MREI). GTP is bound by residues Gln-11, Glu-69, Ser-138, Gly-142, Thr-143, and Gly-144. Glu-69 contacts Mg(2+). At Ser-172 the chain carries Phosphoserine; by CDK1. 2 residues coordinate GTP: Asn-204 and Asn-226. The interval 430-451 (AGLEDSEEDVEEAEVEAEDKDH) is disordered. A compositionally biased stretch (acidic residues) spans 433–451 (EDSEEDVEEAEVEAEDKDH). A Phosphoserine modification is found at Ser-435. Glu-440 carries the 5-glutamyl polyglutamate modification.

It belongs to the tubulin family. In terms of assembly, dimer of alpha and beta chains. A typical microtubule is a hollow water-filled tube with an outer diameter of 25 nm and an inner diameter of 15 nM. Alpha-beta heterodimers associate head-to-tail to form protofilaments running lengthwise along the microtubule wall with the beta-tubulin subunit facing the microtubule plus end conferring a structural polarity. Microtubules usually have 13 protofilaments but different protofilament numbers can be found in some organisms and specialized cells. Interacts with RANBP10. Mg(2+) is required as a cofactor. Some glutamate residues at the C-terminus are polyglycylated, resulting in polyglycine chains on the gamma-carboxyl group. Glycylation is mainly limited to tubulin incorporated into axonemes (cilia and flagella) whereas glutamylation is prevalent in neuronal cells, centrioles, axonemes, and the mitotic spindle. Both modifications can coexist on the same protein on adjacent residues, and lowering polyglycylation levels increases polyglutamylation, and reciprocally. Cilia and flagella glycylation is required for their stability and maintenance. Flagella glycylation controls sperm motility. Post-translationally, some glutamate residues at the C-terminus are polyglutamylated, resulting in polyglutamate chains on the gamma-carboxyl group. Polyglutamylation plays a key role in microtubule severing by spastin (SPAST). SPAST preferentially recognizes and acts on microtubules decorated with short polyglutamate tails: severing activity by SPAST increases as the number of glutamates per tubulin rises from one to eight, but decreases beyond this glutamylation threshold. Glutamylation is also involved in cilia motility. In terms of processing, phosphorylated on Ser-172 by CDK1 during the cell cycle, from metaphase to telophase, but not in interphase. This phosphorylation inhibits tubulin incorporation into microtubules.

The protein resides in the cytoplasm. It localises to the cytoskeleton. In terms of biological role, tubulin is the major constituent of microtubules, a cylinder consisting of laterally associated linear protofilaments composed of alpha- and beta-tubulin heterodimers. Microtubules grow by the addition of GTP-tubulin dimers to the microtubule end, where a stabilizing cap forms. Below the cap, tubulin dimers are in GDP-bound state, owing to GTPase activity of alpha-tubulin. This is Tubulin beta-1 chain (Tubb1) from Mus musculus (Mouse).